We begin with the raw amino-acid sequence, 187 residues long: Capsid protein VP10 (187 aa).

An intrachain disulfide couples Cys45 to Cys51.

Its subcellular location is the virion. Functionally, VP10 self-assembles, together with capsid protein VP4, to form an icosahedral caspid of 87 nm in diameter, with a T=43 symmetry and composed of 420 hexamers and 12 pentamers. VP4 proteins arrange into hexons, while VP10 proteins form the pentameric densities located at the 5-fold axes in the virion. The stoichiometry of VP4:VP10 is 42:1. The sequence is that of Capsid protein VP10 from Sulfolobus polyhedral virus 1 (SPV1).